The sequence spans 819 residues: Pentatricopeptide repeat-containing protein At1g52620 (819 aa).

18 PPR repeats span residues 98–132 (NGFA…NVKL), 133–163 (THEA…VVEL), 169–203 (DVIA…GDSV), 204–238 (DNYS…GCIP), 239–273 (NIVF…GFMP), 274–308 (TLET…GLRV), 309–343 (SVWF…DCKP), 344–378 (DVAT…GLIP), 379–413 (NNLS…GCKP), 414–448 (DIVT…GVSP), 449–483 (DAAI…NILP), 484–518 (DAYV…GVKV), 519–553 (DVVH…HLVP), 554–588 (DKFT…KCKP), 589–623 (NVVT…DLVP), 624–659 (NVVT…KCVP), 709–743 (HAAA…GFSP), and 744–779 (DPVS…GLEV).

It belongs to the PPR family. P subfamily.

The chain is Pentatricopeptide repeat-containing protein At1g52620 from Arabidopsis thaliana (Mouse-ear cress).